Reading from the N-terminus, the 149-residue chain is Nucleoside diphosphate kinase (149 aa).

The ATP site is built by Lys-9, Phe-57, Arg-85, Thr-91, Arg-102, and Asn-112. Catalysis depends on His-115, which acts as the Pros-phosphohistidine intermediate.

It belongs to the NDK family. In terms of assembly, homotetramer. Mg(2+) serves as cofactor.

Its subcellular location is the cytoplasm. The enzyme catalyses a 2'-deoxyribonucleoside 5'-diphosphate + ATP = a 2'-deoxyribonucleoside 5'-triphosphate + ADP. It catalyses the reaction a ribonucleoside 5'-diphosphate + ATP = a ribonucleoside 5'-triphosphate + ADP. In terms of biological role, major role in the synthesis of nucleoside triphosphates other than ATP. The ATP gamma phosphate is transferred to the NDP beta phosphate via a ping-pong mechanism, using a phosphorylated active-site intermediate. The sequence is that of Nucleoside diphosphate kinase from Trichodesmium erythraeum (strain IMS101).